Reading from the N-terminus, the 468-residue chain is Secreted triacylglycerol lipase LIP7 (468 aa).

The signal sequence occupies residues 1 to 21 (MFPRQILVFAALGLCFALVAG). The cysteines at positions 125 and 295 are disulfide-linked. Ser-209 serves as the catalytic Nucleophile. Active-site residues include Asp-355 and His-389.

The protein belongs to the AB hydrolase superfamily. Lipase family. Class Lip subfamily.

Its subcellular location is the secreted. It localises to the cell wall. The catalysed reaction is a triacylglycerol + H2O = a diacylglycerol + a fatty acid + H(+). It carries out the reaction a monoacylglycerol + H2O = glycerol + a fatty acid + H(+). It catalyses the reaction a diacylglycerol + H2O = a monoacylglycerol + a fatty acid + H(+). In terms of biological role, secreted lipase involved in Dandruff and seborrheic dermatitis (D/SD) probably via lipase-mediated breakdown of sebaceous lipids and release of irritating free fatty acids. Has triacylglycerol lipase activity and is able to hydrolyze triolein. Mostly converts monoolein to di- and triolein, while free fatty acids are only produced in low amounts. This chain is Secreted triacylglycerol lipase LIP7, found in Malassezia globosa (strain ATCC MYA-4612 / CBS 7966) (Dandruff-associated fungus).